We begin with the raw amino-acid sequence, 312 residues long: Methionyl-tRNA formyltransferase (312 aa).

109-112 is a (6S)-5,6,7,8-tetrahydrofolate binding site; that stretch reads SLLP.

The protein belongs to the Fmt family.

The enzyme catalyses L-methionyl-tRNA(fMet) + (6R)-10-formyltetrahydrofolate = N-formyl-L-methionyl-tRNA(fMet) + (6S)-5,6,7,8-tetrahydrofolate + H(+). Its function is as follows. Attaches a formyl group to the free amino group of methionyl-tRNA(fMet). The formyl group appears to play a dual role in the initiator identity of N-formylmethionyl-tRNA by promoting its recognition by IF2 and preventing the misappropriation of this tRNA by the elongation apparatus. The polypeptide is Methionyl-tRNA formyltransferase (Geotalea daltonii (strain DSM 22248 / JCM 15807 / FRC-32) (Geobacter daltonii)).